The sequence spans 237 residues: Undecaprenyl-diphosphatase (237 aa).

7 helical membrane-spanning segments follow: residues 38-58 (QTAVLHLGTLVSVVLFAFDGI), 65-85 (WRIILNLIVSTIPAGVFGVLF), 92-112 (LFSSPRFLPLFFSVTALILMF), 126-146 (MSFLDALLVGIAQLFALFPGI), 166-186 (ALQYSFLMSIPVVLGAGILGL), 191-211 (ITILAPIFAFLSGLFALYVLS), and 217-237 (GKIWQFSYYCLFVAILSYLVG).

This sequence belongs to the UppP family.

The protein localises to the cell inner membrane. It carries out the reaction di-trans,octa-cis-undecaprenyl diphosphate + H2O = di-trans,octa-cis-undecaprenyl phosphate + phosphate + H(+). Catalyzes the dephosphorylation of undecaprenyl diphosphate (UPP). Confers resistance to bacitracin. This Thermotoga petrophila (strain ATCC BAA-488 / DSM 13995 / JCM 10881 / RKU-1) protein is Undecaprenyl-diphosphatase.